Consider the following 264-residue polypeptide: MEMO1 family protein Mbur_2394 (264 aa).

It belongs to the MEMO1 family.

This chain is MEMO1 family protein Mbur_2394, found in Methanococcoides burtonii (strain DSM 6242 / NBRC 107633 / OCM 468 / ACE-M).